A 72-amino-acid polypeptide reads, in one-letter code: Translation initiation factor IF-1 2 (72 aa).

The S1-like domain maps to 1 to 72; it reads MAKEELIEFE…TKGRINYRHK (72 aa).

It belongs to the IF-1 family. Component of the 30S ribosomal translation pre-initiation complex which assembles on the 30S ribosome in the order IF-2 and IF-3, IF-1 and N-formylmethionyl-tRNA(fMet); mRNA recruitment can occur at any time during PIC assembly.

It is found in the cytoplasm. Functionally, one of the essential components for the initiation of protein synthesis. Stabilizes the binding of IF-2 and IF-3 on the 30S subunit to which N-formylmethionyl-tRNA(fMet) subsequently binds. Helps modulate mRNA selection, yielding the 30S pre-initiation complex (PIC). Upon addition of the 50S ribosomal subunit IF-1, IF-2 and IF-3 are released leaving the mature 70S translation initiation complex. In Ralstonia nicotianae (strain ATCC BAA-1114 / GMI1000) (Ralstonia solanacearum), this protein is Translation initiation factor IF-1 2.